Consider the following 206-residue polypeptide: Two-component response regulator ARR15 (206 aa).

Residues 19–146 (HVLAVDDSFV…DVKRLKELIM (128 aa)) enclose the Response regulatory domain. Residue aspartate 79 is modified to 4-aspartylphosphate. The interval 151-206 (AEEGKTKKLSPKRILQNDIDSSPSSSSTSSSSSSHDVSSLDDDTPSSKRIKLESRG) is disordered. A compositionally biased stretch (low complexity) spans 168 to 187 (DIDSSPSSSSTSSSSSSHDV).

Belongs to the ARR family. Type-A subfamily. In terms of processing, two-component system major event consists of a His-to-Asp phosphorelay between a sensor histidine kinase (HK) and a response regulator (RR). In plants, the His-to-Asp phosphorelay involves an additional intermediate named Histidine-containing phosphotransfer protein (HPt). This multistep phosphorelay consists of a His-Asp-His-Asp sequential transfer of a phosphate group between first a His and an Asp of the HK protein, followed by the transfer to a conserved His of the HPt protein and finally the transfer to an Asp in the receiver domain of the RR protein.

Its subcellular location is the nucleus. Functionally, functions as a response regulator involved in His-to-Asp phosphorelay signal transduction system. Phosphorylation of the Asp residue in the receiver domain activates the ability of the protein to promote the transcription of target genes. Type-A response regulators seem to act as negative regulators of the cytokinin signaling. This chain is Two-component response regulator ARR15 (ARR15), found in Arabidopsis thaliana (Mouse-ear cress).